We begin with the raw amino-acid sequence, 423 residues long: Maltooligosaccharide ABC transporter solute-binding lipoprotein (423 aa).

Positions 1–24 (MSSKFMKSAAVLGTATLASLLLVA) are cleaved as a signal peptide. Cysteine 25 carries the N-palmitoyl cysteine lipid modification. The S-diacylglycerol cysteine moiety is linked to residue cysteine 25. Residues tyrosine 52, aspartate 77, aspartate 83, 103–104 (DR), glutamate 148, aspartate 193, asparagine 196, 251–254 (EGAG), tryptophan 274, and lysine 307 each bind substrate.

This sequence belongs to the bacterial solute-binding protein 1 family.

The protein localises to the cell membrane. Part of an ABC transporter complex involved in the uptake of maltodextrins. Binds glycogen-derived linear maltooligosaccharides increasing in size from maltotriose to maltooctaose with the highest affinity for maltotriose. Has a very weak affinity for maltose. Has also a very low affinity for maltotetraitol, indicating that the binding is selective for maltooligosaccharides with an intact reducing end. The protein is Maltooligosaccharide ABC transporter solute-binding lipoprotein of Streptococcus pneumoniae serotype 4 (strain ATCC BAA-334 / TIGR4).